A 249-amino-acid chain; its full sequence is 3-deoxy-manno-octulosonate cytidylyltransferase (249 aa).

It belongs to the KdsB family.

The protein resides in the cytoplasm. The catalysed reaction is 3-deoxy-alpha-D-manno-oct-2-ulosonate + CTP = CMP-3-deoxy-beta-D-manno-octulosonate + diphosphate. It functions in the pathway nucleotide-sugar biosynthesis; CMP-3-deoxy-D-manno-octulosonate biosynthesis; CMP-3-deoxy-D-manno-octulosonate from 3-deoxy-D-manno-octulosonate and CTP: step 1/1. It participates in bacterial outer membrane biogenesis; lipopolysaccharide biosynthesis. In terms of biological role, activates KDO (a required 8-carbon sugar) for incorporation into bacterial lipopolysaccharide in Gram-negative bacteria. The chain is 3-deoxy-manno-octulosonate cytidylyltransferase from Photorhabdus laumondii subsp. laumondii (strain DSM 15139 / CIP 105565 / TT01) (Photorhabdus luminescens subsp. laumondii).